The chain runs to 421 residues: Serine--tRNA ligase (421 aa).

225–227 contacts L-serine; that stretch reads TAE. ATP-binding positions include 256-258 and V272; that span reads RSE. E279 contacts L-serine. 345 to 348 serves as a coordination point for ATP; the sequence is ETHS. T380 contacts L-serine.

Belongs to the class-II aminoacyl-tRNA synthetase family. Type-1 seryl-tRNA synthetase subfamily. As to quaternary structure, homodimer. The tRNA molecule binds across the dimer.

It is found in the cytoplasm. It catalyses the reaction tRNA(Ser) + L-serine + ATP = L-seryl-tRNA(Ser) + AMP + diphosphate + H(+). The enzyme catalyses tRNA(Sec) + L-serine + ATP = L-seryl-tRNA(Sec) + AMP + diphosphate + H(+). It participates in aminoacyl-tRNA biosynthesis; selenocysteinyl-tRNA(Sec) biosynthesis; L-seryl-tRNA(Sec) from L-serine and tRNA(Sec): step 1/1. Functionally, catalyzes the attachment of serine to tRNA(Ser). Is also able to aminoacylate tRNA(Sec) with serine, to form the misacylated tRNA L-seryl-tRNA(Sec), which will be further converted into selenocysteinyl-tRNA(Sec). The sequence is that of Serine--tRNA ligase from Thermus thermophilus (strain ATCC 27634 / DSM 579 / HB8).